A 385-amino-acid polypeptide reads, in one-letter code: MRFIKKYPLLNIVNSFLIDYPAPPNISYLWNFGALAAFCLGIQIVTGIFLAMFYVPSIESAFSSVQYIMRDVNYGWLIRYIHANGASFFFICVYIHVFRGLYYNSYITPRELLWNLGVTILIVMILTAFLGYVLPWGQMSFWAATVITSLFSAIPVVGEYIVIWLWGGFSVDNATLNRFFSLHYLLPFVIALLSLIHVAVLHESGSSNPLNIALSVANKVPFHPYFIFKDLLGIIFFLIVFCYAVFFKPDSIIDPINNVPANPLVTPTHIVPEWYFLPFYAILRSIPNKLGGVITLGLALIVLFLLPFITNNVFKGSFFEISKTILFWSFFSVCVLLGWIGFKPIEDPYLMLGQMLTVLYFFYFFSLAVIVPTLQAYTFKNVFAK.

4 consecutive transmembrane segments (helical) span residues 32 to 52 (FGAL…FLAM), 76 to 98 (WLIR…IHVF), 113 to 133 (LWNL…LGYV), and 179 to 199 (FFSL…IHVA). Heme b-binding residues include H82 and H96. Positions 183 and 197 each coordinate heme b. H202 is an a ubiquinone binding site. A run of 4 helical transmembrane segments spans residues 226 to 246 (FIFK…YAVF), 290 to 310 (LGGV…PFIT), 322 to 342 (SKTI…WIGF), and 349 to 369 (YLML…SLAV).

It belongs to the cytochrome b family. The main subunits of complex b-c1 are: cytochrome b, cytochrome c1 and the Rieske protein. Requires heme b as cofactor.

It localises to the mitochondrion inner membrane. In terms of biological role, component of the ubiquinol-cytochrome c reductase complex (complex III or cytochrome b-c1 complex) that is part of the mitochondrial respiratory chain. The b-c1 complex mediates electron transfer from ubiquinol to cytochrome c. Contributes to the generation of a proton gradient across the mitochondrial membrane that is then used for ATP synthesis. In Acanthamoeba castellanii (Amoeba), this protein is Cytochrome b (MT-CYB).